The sequence spans 513 residues: 2-isopropylmalate synthase (513 aa).

Residues 5 to 267 form the Pyruvate carboxyltransferase domain; that stretch reads LVIFDTTLRD…ETRIDTTQIV (263 aa). Positions 14, 202, 204, and 238 each coordinate Mn(2+). The tract at residues 393 to 513 is regulatory domain; the sequence is KLVYSRVCSE…LDKVKAQGGV (121 aa).

It belongs to the alpha-IPM synthase/homocitrate synthase family. LeuA type 1 subfamily. As to quaternary structure, homodimer. Requires Mn(2+) as cofactor.

The protein resides in the cytoplasm. It carries out the reaction 3-methyl-2-oxobutanoate + acetyl-CoA + H2O = (2S)-2-isopropylmalate + CoA + H(+). The protein operates within amino-acid biosynthesis; L-leucine biosynthesis; L-leucine from 3-methyl-2-oxobutanoate: step 1/4. Catalyzes the condensation of the acetyl group of acetyl-CoA with 3-methyl-2-oxobutanoate (2-ketoisovalerate) to form 3-carboxy-3-hydroxy-4-methylpentanoate (2-isopropylmalate). This is 2-isopropylmalate synthase from Dechloromonas aromatica (strain RCB).